The following is a 226-amino-acid chain: MRINEMALHEKPRERLITYGAKSLSNVELLAILLNTGRKGFSSIDIANELLKQQSTIRDLKKLSINDLLKIKGIGLYKAVILQAAFELGERINSTSTFDKVQITHPSDVASLMMSTMKDLEQEHFVVLLLNSKNIVTKQAWVYKGTLNSSIIHPREVFNIAIRESSNSIIVVHNHPSGDVTPSKEDITTTYRLKECGDILGINLLDHIIIGDNKFTSLVEAGYFDK.

One can recognise an MPN domain in the interval 102–224 (QITHPSDVAS…FTSLVEAGYF (123 aa)). Zn(2+)-binding residues include histidine 173, histidine 175, and aspartate 186. The short motif at 173-186 (HNHPSGDVTPSKED) is the JAMM motif element.

This sequence belongs to the UPF0758 family.

This chain is UPF0758 protein SE_1336, found in Staphylococcus epidermidis (strain ATCC 12228 / FDA PCI 1200).